A 169-amino-acid polypeptide reads, in one-letter code: PTS system glucose-specific EIIA component (169 aa).

One can recognise a PTS EIIA type-1 domain in the interval 39 to 143 (DVVFAEKIVG…STLTPVVISN (105 aa)). Zn(2+)-binding residues include His76 and His91. His91 (tele-phosphohistidine intermediate; for EIIA activity) is an active-site residue. His91 is modified (phosphohistidine; by HPr).

In terms of assembly, heterodimer with glycerol kinase (glpk). It depends on Zn(2+) as a cofactor.

It is found in the cytoplasm. In terms of biological role, the phosphoenolpyruvate-dependent sugar phosphotransferase system (sugar PTS), a major carbohydrate active transport system, catalyzes the phosphorylation of incoming sugar substrates concomitantly with their translocation across the cell membrane. The enzyme II complex composed of PtsG and Crr is involved in glucose transport. The chain is PTS system glucose-specific EIIA component (crr) from Salmonella typhi.